The primary structure comprises 213 residues: Uridine kinase (213 aa).

14–21 (GASASGKS) contacts ATP.

It belongs to the uridine kinase family.

Its subcellular location is the cytoplasm. It catalyses the reaction uridine + ATP = UMP + ADP + H(+). It carries out the reaction cytidine + ATP = CMP + ADP + H(+). It functions in the pathway pyrimidine metabolism; CTP biosynthesis via salvage pathway; CTP from cytidine: step 1/3. The protein operates within pyrimidine metabolism; UMP biosynthesis via salvage pathway; UMP from uridine: step 1/1. The sequence is that of Uridine kinase from Vibrio vulnificus (strain CMCP6).